A 261-amino-acid chain; its full sequence is Thiamine thiazole synthase (261 aa).

Residues Ala33, 52-53 (ER), Gly60, Val124, and 152-154 (HVD) each bind NAD(+). 2 residues coordinate Fe cation: Asp154 and His169. Ile219 is an NAD(+) binding site. Arg229 is a binding site for glycine.

This sequence belongs to the THI4 family. As to quaternary structure, homooctamer; tetramer of dimers. The cofactor is Fe(2+).

It catalyses the reaction hydrogen sulfide + glycine + NAD(+) = ADP-5-ethyl-4-methylthiazole-2-carboxylate + nicotinamide + 3 H2O + H(+). The protein operates within cofactor biosynthesis; thiamine diphosphate biosynthesis. Involved in the biosynthesis of the thiazole moiety of thiamine. Catalyzes the conversion of NAD and glycine to adenosine diphosphate 5-(2-hydroxyethyl)-4-methylthiazole-2-carboxylate (ADT), an adenylated thiazole intermediate, using free sulfide as a source of sulfur. This chain is Thiamine thiazole synthase, found in Pyrobaculum calidifontis (strain DSM 21063 / JCM 11548 / VA1).